Consider the following 224-residue polypeptide: GTP-binding protein RHO3 (224 aa).

22–29 (GDGACGKT) contributes to the GTP binding site. Residues 44–52 (YEPTVFENY) carry the Effector region motif. Residues 69–73 (DTAGQ) and 127–130 (LKCD) contribute to the GTP site. Residues 205-224 (TPKGARDSAPEAESSSCTIM) are disordered. At cysteine 221 the chain carries Cysteine methyl ester. Cysteine 221 carries S-geranylgeranyl cysteine lipidation. A propeptide spans 222-224 (TIM) (removed in mature form).

The protein belongs to the small GTPase superfamily. Rho family.

It is found in the cell membrane. In terms of biological role, involved in the regulation of actin polarization. Rho proteins are required for distinct steps during polarized hyphal growth of A.gossypii. The protein is GTP-binding protein RHO3 (RHO3) of Eremothecium gossypii (strain ATCC 10895 / CBS 109.51 / FGSC 9923 / NRRL Y-1056) (Yeast).